The chain runs to 292 residues: Acetylglutamate kinase (292 aa).

Substrate-binding positions include 64-65 (GG), Arg-86, and Asn-190.

The protein belongs to the acetylglutamate kinase family. ArgB subfamily.

It is found in the cytoplasm. It catalyses the reaction N-acetyl-L-glutamate + ATP = N-acetyl-L-glutamyl 5-phosphate + ADP. The protein operates within amino-acid biosynthesis; L-arginine biosynthesis; N(2)-acetyl-L-ornithine from L-glutamate: step 2/4. In terms of biological role, catalyzes the ATP-dependent phosphorylation of N-acetyl-L-glutamate. This Geobacter sp. (strain M21) protein is Acetylglutamate kinase.